Reading from the N-terminus, the 651-residue chain is UvrABC system protein C (651 aa).

A GIY-YIG domain is found at 21-100 (TEPGCYLMRD…IKNQQPHFNV (80 aa)). The region spanning 210–245 (DELRQLLNQQMERYAERLDFESAARIRDQLQGIDQL) is the UVR domain.

It belongs to the UvrC family. In terms of assembly, interacts with UvrB in an incision complex.

It localises to the cytoplasm. In terms of biological role, the UvrABC repair system catalyzes the recognition and processing of DNA lesions. UvrC both incises the 5' and 3' sides of the lesion. The N-terminal half is responsible for the 3' incision and the C-terminal half is responsible for the 5' incision. This is UvrABC system protein C from Synechococcus sp. (strain CC9311).